We begin with the raw amino-acid sequence, 355 residues long: Guanine nucleotide-binding protein G(i) subunit alpha (355 aa).

Gly-2 carries N-myristoyl glycine lipidation. Cys-3 carries the S-palmitoyl cysteine lipid modification. The G-alpha domain maps to 33-355 (REVKLLLLGA…KNNLKDCGLF (323 aa)). Residues 36 to 49 (KLLLLGAGESGKST) form a G1 motif region. GTP-binding positions include 41–48 (GAGESGKS), 176–182 (LRTRVKT), 201–205 (DVGGQ), 270–273 (NKKD), and Ala-327. Mg(2+)-binding residues include Ser-48 and Thr-182. Residues 174–182 (DVLRTRVKT) are G2 motif. The G3 motif stretch occupies residues 197–206 (FKLFDVGGQR). A G4 motif region spans residues 266-273 (ILFLNKKD). Residues 325-330 (TCATDT) are G5 motif.

This sequence belongs to the G-alpha family. G(i/o/t/z) subfamily. In terms of assembly, g proteins are composed of 3 units; alpha, beta and gamma. The alpha chain contains the guanine nucleotide binding site.

Guanine nucleotide-binding proteins (G proteins) are involved as modulators or transducers in various transmembrane signaling systems. In Homarus americanus (American lobster), this protein is Guanine nucleotide-binding protein G(i) subunit alpha.